Consider the following 224-residue polypeptide: Casparian strip membrane protein 3 (224 aa).

Residues Met1–Ala30 form a disordered region. Residues Met1 to Ala57 lie on the Cytoplasmic side of the membrane. A helical membrane pass occupies residues Ile58–Met78. Residues Gly79 to Gln105 are Extracellular-facing. A helical transmembrane segment spans residues Phe106–Ile126. Residues Val127–Arg138 are Cytoplasmic-facing. The helical transmembrane segment at Leu139–Ala159 threads the bilayer. At Ala160 to Gln191 the chain is on the extracellular side. A glycan (N-linked (GlcNAc...) asparagine) is linked at Asn168. Residues Ala192–Val212 form a helical membrane-spanning segment. At Ala213–Trp224 the chain is on the cytoplasmic side.

It belongs to the Casparian strip membrane proteins (CASP) family. As to quaternary structure, homodimer and heterodimers.

Its subcellular location is the cell membrane. Its function is as follows. Regulates membrane-cell wall junctions and localized cell wall deposition. Required for establishment of the Casparian strip membrane domain (CSD) and the subsequent formation of Casparian strips, a cell wall modification of the root endodermis that determines an apoplastic barrier between the intraorganismal apoplasm and the extraorganismal apoplasm and prevents lateral diffusion. The sequence is that of Casparian strip membrane protein 3 from Vigna unguiculata (Cowpea).